The chain runs to 406 residues: Tubby-like F-box protein 3 (406 aa).

The 56-residue stretch at 50–105 (SCWASMPPELLRDVLMRIEQSEDTWPSRKNVVSCAGVCRNWREIVKEIVRVPELSS) folds into the F-box domain.

Belongs to the TUB family. Ubiquitous at low levels. Not detected in mature siliques.

The protein resides in the cell membrane. Its subcellular location is the plastid. It is found in the nucleus. It localises to the nucleoplasm. The protein localises to the cytoplasm. Functionally, involved in abiotic stress signaling. Tethered to plasma membrane (PM) and probably bound to phosphatidylinositol 4,5-bisphosphate. Abiotic stresses (drought, salt, H(2)O(2)) trigger phospholipase C mediated PM dislogement and plastidial and nucleocytosolic relocation of TULP3. In Arabidopsis thaliana (Mouse-ear cress), this protein is Tubby-like F-box protein 3.